The following is an 881-amino-acid chain: Mechanosensitive ion channel protein 5 (881 aa).

Composition is skewed to basic and acidic residues over residues 1-12 and 48-59; these read MAAVDSTDRRDF and DGEKGKNDKKGD. Positions 1 to 248 are disordered; the sequence is MAAVDSTDRR…RNGFEEEEEE (248 aa). A compositionally biased stretch (polar residues) spans 115-145; it reads ELQSNTPPRPATASNTPRRGLTTISESSSPV. Residues 169–179 show a composition bias toward basic and acidic residues; the sequence is EEGRNRDEAEV. A Phosphoserine modification is found at S231. The next 6 helical transmembrane spans lie at 265 to 285, 309 to 329, 349 to 369, 387 to 407, 642 to 662, and 677 to 697; these read LSFWVFLEWISLVLIVTSLVC, VLVLICGRLVSSWIVRIIVFL, KSVQNCLWLGLVLLAWHFLFD, VLVCLLVALIIWLVKTILVKV, IINVVIGIIIIIIWLLILGIA, and VAFVFGNSCKTIFEAIIFLFV. The interval 861–881 is disordered; the sequence is PTANPTSSDRIPPSWMQQRGP. Polar residues predominate over residues 864–881; the sequence is NPTSSDRIPPSWMQQRGP.

Belongs to the MscS (TC 1.A.23) family.

The protein localises to the membrane. Its function is as follows. Mechanosensitive channel that opens in response to stretch forces in the membrane lipid bilayer. The protein is Mechanosensitive ion channel protein 5 (MSL5) of Arabidopsis thaliana (Mouse-ear cress).